The following is a 921-amino-acid chain: Short transient receptor potential channel 3 (921 aa).

The tract at residues 1 to 73 (MSTKVRKCKE…PPFSHGPDLS (73 aa)) is disordered. The Cytoplasmic portion of the chain corresponds to 1-459 (MSTKVRKCKE…KILRSPFMKF (459 aa)). Positions 19 to 31 (PEEEEDEGEDEGA) are enriched in acidic residues. 4 ANK repeats span residues 111–140 (AEEERFLDAAEYGNIPVVRKMLEESKTLNV), 146–175 (MGQNALQLAVGNEHLEVTELLLKKENLARI), 177–203 (DALLLAISKGYVRIVEAILNHPGFAAS), and 232–261 (PDITPIILAAHCQKYEVVHMLLMKGARIER). Glu-158 is a binding site for Ca(2+). The chain crosses the membrane as a helical span at residues 460–477 (VAHAASFIIFLGLLVFNA). Residues 478 to 508 (SDRFEGITTLPNITVTDYPKQIFRVKTTQFT) are Extracellular-facing. N-linked (GlcNAc...) asparagine glycosylation is present at Asn-489. The chain crosses the membrane as a helical span at residues 509 to 527 (WTEMLIMVWVLGMMWSECK). Residues Glu-525, Glu-528, and Asn-543 each coordinate Ca(2+). Topologically, residues 528 to 540 (ELWLEGPREYILQ) are cytoplasmic. The helical transmembrane segment at 541 to 562 (LWNVLDFGMLSIFIAAFTARFL) threads the bilayer. Residues 563 to 606 (AFLQATKAQQYVDSYVQESDLSEVTLPPEIQYFTYARDKWLPSD) are Extracellular-facing. Residues 607-630 (PQIISEGLYAIAVVLSFSRIAYIL) form a helical membrane-spanning segment. The Cytoplasmic segment spans residues 631–649 (PANESFGPLQISLGRTVKD). The stretch at 634–663 (ESFGPLQISLGRTVKDIFKFMVLFIMVFFA) is one ANK 5 repeat. A helical transmembrane segment spans residues 650-673 (IFKFMVLFIMVFFAFMIGMFILYS). The Extracellular segment spans residues 674 to 713 (YYLGAKVNAAFTTVEESFKTLFWSIFGLSEVTSVVLKYDH). The chain crosses the membrane as a helical span at residues 714–739 (KFIENIGYVLYGIYNVTMVVVLLNML). The Cytoplasmic segment spans residues 740 to 921 (IAMINSSYQE…KLNPSMLRCE (182 aa)). The binds to IP3R3 stretch occupies residues 850-870 (QIMKRLIKRYVLKAQVDKEND). Residues Glu-871, Glu-874, Glu-876, and Asp-883 each contribute to the Ca(2+) site.

It belongs to the transient receptor (TC 1.A.4) family. STrpC subfamily. TRPC3 sub-subfamily. As to quaternary structure, homotetramer. Interacts with ITPR1. Interacts with ITPR3. Interacts with MX1. Interacts with RNF24. Interacts with JPH2; the interaction is involved in maintaining Ca(2+) homeostasis in skeletal muscle and is mediated by JPH2 'Ser-165' phosphorylation. Interacts with isoform short of TRPC1. Expressed predominantly in brain and at much lower levels in ovary, colon, small intestine, lung, prostate, placenta and testis.

The protein resides in the cell membrane. The enzyme catalyses Ca(2+)(in) = Ca(2+)(out). With respect to regulation, activated by diacylglycerol (DAG) in a membrane-delimited fashion, independently of protein kinase C. Activated by inositol 1,4,5-triphosphate receptors (ITPR) with bound IP3. May be activated by internal calcium store depletion. Inhibited by intracellular Ca(2+). Its function is as follows. Forms a receptor-activated non-selective calcium permeant cation channel. Forms a receptor-activated non-selective calcium permeant cation channel. May be operated by a phosphatidylinositol second messenger system activated by receptor tyrosine kinases or G-protein coupled receptors. The chain is Short transient receptor potential channel 3 (TRPC3) from Homo sapiens (Human).